We begin with the raw amino-acid sequence, 214 residues long: Alpha-S1-casein (214 aa).

An N-terminal signal peptide occupies residues methionine 1–alanine 15. The interval isoleucine 59 to alanine 91 is disordered. Phosphoserine occurs at positions 61, 63, 79, 80, 81, 82, 83, 90, and 130.

It belongs to the alpha-casein family. As to expression, mammary gland specific. Secreted in milk.

The protein resides in the secreted. Important role in the capacity of milk to transport calcium phosphate. The polypeptide is Alpha-S1-casein (CSN1S1) (Capra hircus (Goat)).